The chain runs to 64 residues: Protein YnhH (64 aa).

In Escherichia coli (strain K12), this protein is Protein YnhH.